A 119-amino-acid polypeptide reads, in one-letter code: MGVYTFVCRSSGDEWTAKQLKGELEASAATPYELQRRLVAAASAADSAAGVQSSFSMVSPSSAVFQVIIGAVGGGAAIGGGAAAGAASGGAAAEAPKAEEKKEEEKEESEDDLGFSLFD.

Positions 81–119 are disordered; sequence GAAAGAASGGAAAEAPKAEEKKEEEKEESEDDLGFSLFD. Low complexity predominate over residues 84–95; that stretch reads AGAASGGAAAEA.

It belongs to the eukaryotic ribosomal protein P1/P2 family. Phosphorylated.

In terms of biological role, plays an important role in the elongation step of protein synthesis. This is Large ribosomal subunit protein P3 from Oryza sativa subsp. japonica (Rice).